The following is a 192-amino-acid chain: Xanthine phosphoribosyltransferase (192 aa).

Xanthine is bound by residues leucine 20 and asparagine 27. 128 to 132 (ANGQA) serves as a coordination point for 5-phospho-alpha-D-ribose 1-diphosphate. Lysine 156 lines the xanthine pocket.

It belongs to the purine/pyrimidine phosphoribosyltransferase family. Xpt subfamily. In terms of assembly, homodimer.

Its subcellular location is the cytoplasm. The enzyme catalyses XMP + diphosphate = xanthine + 5-phospho-alpha-D-ribose 1-diphosphate. The protein operates within purine metabolism; XMP biosynthesis via salvage pathway; XMP from xanthine: step 1/1. Its function is as follows. Converts the preformed base xanthine, a product of nucleic acid breakdown, to xanthosine 5'-monophosphate (XMP), so it can be reused for RNA or DNA synthesis. This Ligilactobacillus salivarius (strain UCC118) (Lactobacillus salivarius) protein is Xanthine phosphoribosyltransferase.